We begin with the raw amino-acid sequence, 109 residues long: Thioredoxin (109 aa).

The 108-residue stretch at 2 to 109 (ETLLWKDARE…LVEKIKELFK (108 aa)) folds into the Thioredoxin domain. Cys27 and Cys30 are disulfide-bonded.

Belongs to the thioredoxin family.

Its function is as follows. Participates in various redox reactions through the reversible oxidation of its active center dithiol to a disulfide and catalyzes dithiol-disulfide exchange reactions. In Mycoplasmopsis pulmonis (strain UAB CTIP) (Mycoplasma pulmonis), this protein is Thioredoxin (trxA).